Reading from the N-terminus, the 852-residue chain is Homeobox-leucine zipper protein ATHB-14 (852 aa).

The interval 1–25 (MMMVHSMSRDMMNRESPDKGLDSGK) is disordered. Over residues 7–22 (MSRDMMNRESPDKGLD) the composition is skewed to basic and acidic residues. Positions 22-85 (DSGKYVRYTP…NRRCREKQRK (64 aa)) form a DNA-binding region, homeobox. Positions 80-122 (REKQRKEAARLQTVNRKLNAMNKLLMEENDRLQKQVSNLVYEN) form a coiled coil. Residues 80 to 130 (REKQRKEAARLQTVNRKLNAMNKLLMEENDRLQKQVSNLVYENGHMKHQLH) are ZIP domain. A compositionally biased stretch (polar residues) spans 130-148 (HTASGTTTDNSCESVVVSG). Residues 130–166 (HTASGTTTDNSCESVVVSGQQHQQQNPNPQHQQRDAN) form a disordered region. Positions 149–160 (QQHQQQNPNPQH) are enriched in low complexity. In terms of domain architecture, START spans 164 to 392 (DANNPAGLLS…IAQETSGEVQ (229 aa)).

Belongs to the HD-ZIP homeobox family. Class III subfamily. In terms of assembly, homodimer. Heterodimer with ZPR3. Interacts with ESR1 and ESR2. Interacts with ZPR3. Expressed in the center of the meristem and on the adaxial side of the leaves.

It is found in the nucleus. Its activity is regulated as follows. Inhibited by ZPR3. Functionally, probable transcription factor involved in the determination of adaxial-abaxial polarity in ovule primordium. Specifies adaxial leaf fates. This is Homeobox-leucine zipper protein ATHB-14 (ATHB-14) from Arabidopsis thaliana (Mouse-ear cress).